We begin with the raw amino-acid sequence, 251 residues long: L-xylulose reductase (251 aa).

Position 13–42 (13–42 (LVTGASQGIGKEICLSLAKAGAQVIAFARN)) interacts with NADP(+). Substrate is bound at residue S143. The active-site Proton acceptor is the Y156. K160 is an NADP(+) binding site.

This sequence belongs to the short-chain dehydrogenases/reductases (SDR) family. Homotetramer. As to expression, expressed in intestine, gonad and spermatids (at protein level). Expressed in intestine, uterine seam, gonadal sheath cells, spermathecal-uterus valve and spermatids.

The protein localises to the cell membrane. The catalysed reaction is xylitol + NADP(+) = L-xylulose + NADPH + H(+). With respect to regulation, strongly inhibited by 10% dimethyl sulfoxide. In terms of biological role, catalyzes the NADPH-dependent reduction of L-xylulose, D-xylulose, L-(+) erythrulose, D-erythrose, D-threose, L-ribulose, 1,4-dibromo-2,3-butanedione and 2,3-heptanedione. Also active against isatin, 9,10-phenanthrenequinone, menadione, 2,3-hexaenadione and 3,4-hexahenadione. No activity observed when tested using NADH rather than NADPH. This chain is L-xylulose reductase, found in Caenorhabditis elegans.